Consider the following 97-residue polypeptide: Large ribosomal subunit protein uL23 (97 aa).

This sequence belongs to the universal ribosomal protein uL23 family. As to quaternary structure, part of the 50S ribosomal subunit. Contacts protein L29, and trigger factor when it is bound to the ribosome.

Its function is as follows. One of the early assembly proteins it binds 23S rRNA. One of the proteins that surrounds the polypeptide exit tunnel on the outside of the ribosome. Forms the main docking site for trigger factor binding to the ribosome. This Allorhizobium ampelinum (strain ATCC BAA-846 / DSM 112012 / S4) (Agrobacterium vitis (strain S4)) protein is Large ribosomal subunit protein uL23.